A 369-amino-acid chain; its full sequence is Prenyltransferase malB (369 aa).

Residue glutamate 87 coordinates substrate. 2 residues coordinate dimethylallyl diphosphate: arginine 100 and tyrosine 189. Tyrosine 191 lines the substrate pocket.

Belongs to the tryptophan dimethylallyltransferase family.

Prenyltransferase; part of the gene cluster that mediates the biosynthesis of malbrancheamide, a dichlorinated fungal indole alkaloid that belongs to a family of natural products containing a characteristic bicyclo[2.2.2]diazaoctane core. The first step of malbrancheamide biosynthesis involves coupling of L-proline and L-tryptophan by malG, a bimodular NRPS, to produce L-Pro-L-Trp aldehyde through reductive offloading. This compound undergoes spontaneous cyclization and dehydration to give a dienamine which is reverse prenylated at C-2 by malE. The other prenyltransferase present in the cluster, malB, displays modest activity, suggesting that may be a redundant gene in the pathway. Subsequently, a [4+2] Diels-Alder cyclo-addition catalyzed by the bifunctional enzyme malC forms the characteristic bicyclo[2.2.2]diazaoctane ring of premalbrancheamid. Finally, the flavin-dependent halogenase malA catalyzes the iterative dichlorination of the indole ring of premalbrancheamide to yield C-9 monochlorinated malbrancheamide B, C-8 monochlorinated isomalbrancheamide B, and dichlorinated malbrancheamide. MalA is also able to brominate premalbrancheamide at C-9 to yield malbrancheamide C, and, to a lesser extend, at C-8 to yield isomalbrancheamide C. Finally, malA can brominate C-9 monochlorinated malbrancheamide B at C-8 to yield malbrancheamide D, or C-8 monochlorinated isomalbrancheamide B at C-9 to produce isomalbrancheamide D. The protein is Prenyltransferase malB of Malbranchea aurantiaca.